Consider the following 122-residue polypeptide: LYR motif-containing protein 1 (122 aa).

Belongs to the complex I LYR family.

May promote cell proliferation and inhibition of apoptosis of preadipocytes. The polypeptide is LYR motif-containing protein 1 (Lyrm1) (Mus musculus (Mouse)).